Reading from the N-terminus, the 554-residue chain is Alpha-taxilin (554 aa).

The disordered stretch occupies residues 1–66 (MKNQDKKNGP…ARAKAAQPGA (66 aa)). Serine 71 is modified (phosphoserine). The segment at 85-166 (YCVDNNQGGP…RRPQEKKKAK (82 aa)) is disordered. The segment covering 91-103 (QGGPAEEGAQGEP) has biased composition (low complexity). Basic and acidic residues predominate over residues 143 to 158 (EEIRASDEVGDRDHRR). Residues 186–491 (EEKLAALCKK…NKRVQDLTAG (306 aa)) adopt a coiled-coil conformation. The interval 492-554 (GITDIGSERR…GPGEPTPATA (63 aa)) is disordered. A phosphoserine mark is found at serine 515 and serine 523.

It belongs to the taxilin family. In terms of assembly, binds to the C-terminal coiled coil region of syntaxin family members STX1A, STX3A and STX4A, but not when these proteins are complexed with SNAP25, VAMP2 or STXBP1, suggesting that it interacts with syntaxins that do not form the SNARE complex.

In terms of biological role, may be involved in intracellular vesicle traffic and potentially in calcium-dependent exocytosis in neuroendocrine cells. The chain is Alpha-taxilin (Txlna) from Mus musculus (Mouse).